The primary structure comprises 341 residues: L-threonine 3-dehydrogenase (341 aa).

Residue cysteine 38 participates in Zn(2+) binding. Active-site charge relay system residues include threonine 40 and histidine 43. Residues histidine 63, glutamate 64, cysteine 93, cysteine 96, cysteine 99, and cysteine 107 each coordinate Zn(2+). Residues isoleucine 175, aspartate 195, arginine 200, 262–264 (LGI), and 286–287 (IY) contribute to the NAD(+) site.

Belongs to the zinc-containing alcohol dehydrogenase family. In terms of assembly, homotetramer. Requires Zn(2+) as cofactor.

The protein resides in the cytoplasm. The enzyme catalyses L-threonine + NAD(+) = (2S)-2-amino-3-oxobutanoate + NADH + H(+). It participates in amino-acid degradation; L-threonine degradation via oxydo-reductase pathway; glycine from L-threonine: step 1/2. In terms of biological role, catalyzes the NAD(+)-dependent oxidation of L-threonine to 2-amino-3-ketobutyrate. This is L-threonine 3-dehydrogenase from Klebsiella pneumoniae (strain 342).